Consider the following 384-residue polypeptide: Signal peptide peptidase-like 3 (384 aa).

At 1–8 (MAEQTYSW) the chain is on the lumenal side. The helical transmembrane segment at 9 to 29 (AYSLVDSSQVSTFLISILLIV) threads the bilayer. The Cytoplasmic segment spans residues 30–73 (YGSFRSLNMDFENQDKEKDSNSSSGSFNGNSTNNSIQTIDSTQA). The chain crosses the membrane as a helical span at residues 74–94 (LFLPIGASVSLLVMFFFFDSV). A topological domain (lumenal) is located at residue Gln95. A helical transmembrane segment spans residues 96–116 (VVFTICTAVLATIAFAFLLLP). The Cytoplasmic portion of the chain corresponds to 117–138 (MCQYLTRPCSPQNKISFGCCGR). The chain crosses the membrane as a helical span at residues 139-159 (FTAAELLSFSLSVMLVLIWVL). Over 160 to 164 (TGHWL) the chain is Lumenal. Residues 165 to 185 (LMDALAMGLCVAMIAFVRLPS) traverse the membrane as a helical segment. Residues 186–190 (LKVSC) lie on the Cytoplasmic side of the membrane. Residues 191-211 (LLLSGLLIYDVFWVFFSAYIF) form a helical membrane-spanning segment. The active site involves Asp200. Over 212–262 (NSNVMVKVATQPADNPLDVLSRKLHLGPNVGRDVPRLSLPGKLVFPSSTGS) the chain is Lumenal. The chain crosses the membrane as a helical span at residues 263–283 (HFSMLGIGDIVMPGLLLCFVL). Asp271 is an active-site residue. The Cytoplasmic segment spans residues 284–311 (RYDNYKKQASGDSCGAPGPANISGRMQK). A helical membrane pass occupies residues 312 to 332 (VSYFHCTLIGYFVGLLTATVA). Residues 333–339 (SRIHRAA) are Lumenal-facing. The chain crosses the membrane as a helical span at residues 340-360 (QPALLYLVPFTLLPLLTMAYL). Residues 341-343 (PAL) carry the PAL motif. Over 361–384 (KGDLRRMWSEPFHSKSSSSRFLEV) the chain is Cytoplasmic.

The protein belongs to the peptidase A22B family. Monomer. Homodimer. Interacts with STIM1 (via transmembrane region and SOAR/CAD domain); the interaction promotes the binding of STIM1 to ORAI1. Post-translationally, not glycosylated.

Its subcellular location is the endoplasmic reticulum membrane. It is found in the golgi apparatus. The protein resides in the membrane. Its activity is regulated as follows. Its proteolytic activity is blocked by a signal peptide peptidase (SPP) inhibitor, (ZLL)2-ketone (ZLL) or a gamma-secretase inhibitor, LY411,575. Its function is as follows. Intramembrane-cleaving aspartic protease (I-CLiP) that cleaves type II membrane protein substrates in or close to their luminal transmembrane domain boundaries. Acts like a sheddase by mediating the proteolytic release and secretion of active site-containing ectodomains of glycan-modifiying glycosidase and glycosyltransferase enzymes such as MGAT5, B4GAT1 and B4GALT1. Plays a role in the regulation of cellular glycosylation processes. Required to link T-cell antigen receptor (TCR) and calcineurin-NFAT signaling cascades in lymphocytes by promoting the association of STIM1 and ORAI1 during store-operated calcium entry (SOCE) in a protease-independent manner. The protein is Signal peptide peptidase-like 3 of Mus musculus (Mouse).